The chain runs to 101 residues: Large ribosomal subunit protein uL23 (101 aa).

Belongs to the universal ribosomal protein uL23 family. Part of the 50S ribosomal subunit. Contacts protein L29, and trigger factor when it is bound to the ribosome.

One of the early assembly proteins it binds 23S rRNA. One of the proteins that surrounds the polypeptide exit tunnel on the outside of the ribosome. Forms the main docking site for trigger factor binding to the ribosome. The chain is Large ribosomal subunit protein uL23 from Micrococcus luteus (strain ATCC 4698 / DSM 20030 / JCM 1464 / CCM 169 / CCUG 5858 / IAM 1056 / NBRC 3333 / NCIMB 9278 / NCTC 2665 / VKM Ac-2230) (Micrococcus lysodeikticus).